The following is a 199-amino-acid chain: Imidazoleglycerol-phosphate dehydratase (199 aa).

Belongs to the imidazoleglycerol-phosphate dehydratase family.

The protein resides in the cytoplasm. The enzyme catalyses D-erythro-1-(imidazol-4-yl)glycerol 3-phosphate = 3-(imidazol-4-yl)-2-oxopropyl phosphate + H2O. It participates in amino-acid biosynthesis; L-histidine biosynthesis; L-histidine from 5-phospho-alpha-D-ribose 1-diphosphate: step 6/9. In Paramagnetospirillum magneticum (strain ATCC 700264 / AMB-1) (Magnetospirillum magneticum), this protein is Imidazoleglycerol-phosphate dehydratase.